The chain runs to 120 residues: Glycine cleavage system H protein (120 aa).

Positions 17-99 constitute a Lipoyl-binding domain; sequence VATVGITTYA…QGAGWFFKLK (83 aa). Lysine 58 carries the post-translational modification N6-lipoyllysine.

It belongs to the GcvH family. As to quaternary structure, the glycine cleavage system is composed of four proteins: P, T, L and H. (R)-lipoate serves as cofactor.

Its function is as follows. The glycine cleavage system catalyzes the degradation of glycine. The H protein shuttles the methylamine group of glycine from the P protein to the T protein. This Rhizobium etli (strain CIAT 652) protein is Glycine cleavage system H protein.